We begin with the raw amino-acid sequence, 611 residues long: Dihydroxy-acid dehydratase (611 aa).

D81 is a Mg(2+) binding site. C122 contributes to the [2Fe-2S] cluster binding site. D123 and K124 together coordinate Mg(2+). N6-carboxylysine is present on K124. C195 contacts [2Fe-2S] cluster. Residue E491 participates in Mg(2+) binding. The Proton acceptor role is filled by S517.

It belongs to the IlvD/Edd family. Homodimer. [2Fe-2S] cluster is required as a cofactor. Requires Mg(2+) as cofactor.

It catalyses the reaction (2R)-2,3-dihydroxy-3-methylbutanoate = 3-methyl-2-oxobutanoate + H2O. The catalysed reaction is (2R,3R)-2,3-dihydroxy-3-methylpentanoate = (S)-3-methyl-2-oxopentanoate + H2O. It functions in the pathway amino-acid biosynthesis; L-isoleucine biosynthesis; L-isoleucine from 2-oxobutanoate: step 3/4. The protein operates within amino-acid biosynthesis; L-valine biosynthesis; L-valine from pyruvate: step 3/4. In terms of biological role, functions in the biosynthesis of branched-chain amino acids. Catalyzes the dehydration of (2R,3R)-2,3-dihydroxy-3-methylpentanoate (2,3-dihydroxy-3-methylvalerate) into 2-oxo-3-methylpentanoate (2-oxo-3-methylvalerate) and of (2R)-2,3-dihydroxy-3-methylbutanoate (2,3-dihydroxyisovalerate) into 2-oxo-3-methylbutanoate (2-oxoisovalerate), the penultimate precursor to L-isoleucine and L-valine, respectively. This chain is Dihydroxy-acid dehydratase, found in Brucella anthropi (strain ATCC 49188 / DSM 6882 / CCUG 24695 / JCM 21032 / LMG 3331 / NBRC 15819 / NCTC 12168 / Alc 37) (Ochrobactrum anthropi).